Here is a 388-residue protein sequence, read N- to C-terminus: Na(+)/H(+) antiporter NhaA (388 aa).

The Cytoplasmic segment spans residues 1–11 (MKHLHRFFSSD). Residues 12-31 (ASGGIILIIAAILAMIMANS) form a helical membrane-spanning segment. Residues 32–58 (GATSGWYHDFLETPVQLRVGSLEINKN) lie on the Periplasmic side of the membrane. The helical transmembrane segment at 59–80 (MLLWINDALMAVFFLLVGLEVK) threads the bilayer. Residues 81-96 (RELMQGSLASLLQAAF) are Cytoplasmic-facing. The helical transmembrane segment at 97–116 (PVIAAIGGMIVPALLYLAFN) threads the bilayer. The Periplasmic portion of the chain corresponds to 117 to 122 (YADPIT). A helical membrane pass occupies residues 123–130 (REGWAIPA). The Cytoplasmic portion of the chain corresponds to 131–154 (ATDIAFALGVLALLGSRVPLVLKI). The chain crosses the membrane as a helical span at residues 155–176 (FLMALAIIDDLGAIIIIALFYT). The Periplasmic portion of the chain corresponds to 177-180 (NDLS). A helical membrane pass occupies residues 181–200 (MASLGVAAVAIAVLAVLNLC). Residues 201 to 204 (GVRR) are Cytoplasmic-facing. The helical transmembrane segment at 205–222 (TGVYILVGVVLWTAVLKS) threads the bilayer. Residue G223 is a topological domain, periplasmic. A helical transmembrane segment spans residues 224 to 236 (VHATLAGVIVGFF). At 237–253 (IPLKEKHGRSPAKRLEH) the chain is on the cytoplasmic side. Residues 254–272 (VLHPWVAYLILPLFAFANA) traverse the membrane as a helical segment. At 273–286 (GVSLQGVTLDGLTS) the chain is on the periplasmic side. A helical membrane pass occupies residues 287-310 (ILPLGIIAGLLIGKPLGISLFCWL). Residues 311–339 (ALRLKLAHLPEGTTYQQIMVVGILCGIGF) lie on the Cytoplasmic side of the membrane. The chain crosses the membrane as a helical span at residues 340–350 (TMSIFIASLAF). At 351–357 (GSVDPEL) the chain is on the periplasmic side. A helical transmembrane segment spans residues 358 to 380 (INWAKLGILVGSISSAVIGYSWL). The Cytoplasmic segment spans residues 381–388 (RVRLRPSV).

This sequence belongs to the NhaA Na(+)/H(+) (TC 2.A.33) antiporter family.

The protein resides in the cell inner membrane. The catalysed reaction is Na(+)(in) + 2 H(+)(out) = Na(+)(out) + 2 H(+)(in). Functionally, na(+)/H(+) antiporter that extrudes sodium in exchange for external protons. The sequence is that of Na(+)/H(+) antiporter NhaA from Shigella flexneri serotype 5b (strain 8401).